The primary structure comprises 253 residues: 5'/3'-nucleotidase SurE (253 aa).

Residues D8, D9, S39, and N92 each coordinate a divalent metal cation.

This sequence belongs to the SurE nucleotidase family. Requires a divalent metal cation as cofactor.

It is found in the cytoplasm. The enzyme catalyses a ribonucleoside 5'-phosphate + H2O = a ribonucleoside + phosphate. The catalysed reaction is a ribonucleoside 3'-phosphate + H2O = a ribonucleoside + phosphate. It catalyses the reaction [phosphate](n) + H2O = [phosphate](n-1) + phosphate + H(+). Its function is as follows. Nucleotidase with a broad substrate specificity as it can dephosphorylate various ribo- and deoxyribonucleoside 5'-monophosphates and ribonucleoside 3'-monophosphates with highest affinity to 3'-AMP. Also hydrolyzes polyphosphate (exopolyphosphatase activity) with the preference for short-chain-length substrates (P20-25). Might be involved in the regulation of dNTP and NTP pools, and in the turnover of 3'-mononucleotides produced by numerous intracellular RNases (T1, T2, and F) during the degradation of various RNAs. The protein is 5'/3'-nucleotidase SurE of Serratia proteamaculans (strain 568).